Consider the following 462-residue polypeptide: beta-Tubulin at 65B (462 aa).

Residues E70, S137, G141, T142, G143, N203, and N225 each contribute to the GTP site. E70 contributes to the Mg(2+) binding site. Residues 420–462 (DYRSSAEGEDSGGGGGGGGGRSGSAESGEEEATPEAHCQYCTE) are disordered. Positions 430–441 (SGGGGGGGGGRS) are enriched in gly residues.

The protein belongs to the tubulin family. Dimer of alpha and beta chains. A typical microtubule is a hollow water-filled tube with an outer diameter of 25 nm and an inner diameter of 15 nM. Alpha-beta heterodimers associate head-to-tail to form protofilaments running lengthwise along the microtubule wall with the beta-tubulin subunit facing the microtubule plus end conferring a structural polarity. Microtubules usually have 13 protofilaments but different protofilament numbers can be found in some organisms and specialized cells. It depends on Mg(2+) as a cofactor.

The protein localises to the cytoplasm. The protein resides in the cytoskeleton. Its function is as follows. Tubulin is the major constituent of microtubules, a cylinder consisting of laterally associated linear protofilaments composed of alpha- and beta-tubulin heterodimers. Microtubules grow by the addition of GTP-tubulin dimers to the microtubule end, where a stabilizing cap forms. Below the cap, tubulin dimers are in GDP-bound state, owing to GTPase activity of alpha-tubulin. The chain is beta-Tubulin at 65B from Drosophila melanogaster (Fruit fly).